The following is a 267-amino-acid chain: Tryptophan synthase alpha chain (267 aa).

Catalysis depends on proton acceptor residues glutamate 49 and aspartate 60.

The protein belongs to the TrpA family. In terms of assembly, tetramer of two alpha and two beta chains.

The catalysed reaction is (1S,2R)-1-C-(indol-3-yl)glycerol 3-phosphate + L-serine = D-glyceraldehyde 3-phosphate + L-tryptophan + H2O. The protein operates within amino-acid biosynthesis; L-tryptophan biosynthesis; L-tryptophan from chorismate: step 5/5. In terms of biological role, the alpha subunit is responsible for the aldol cleavage of indoleglycerol phosphate to indole and glyceraldehyde 3-phosphate. In Salinispora tropica (strain ATCC BAA-916 / DSM 44818 / JCM 13857 / NBRC 105044 / CNB-440), this protein is Tryptophan synthase alpha chain.